A 678-amino-acid polypeptide reads, in one-letter code: uncharacterized protein (678 aa).

2 consecutive transmembrane segments (helical) span residues 14–34 and 180–200; these read LMFA…WTGL and GAVI…IGGF.

The protein belongs to the mycobacterial PPE family.

It is found in the cell membrane. This is an uncharacterized protein from Mycobacterium tuberculosis (strain CDC 1551 / Oshkosh).